A 140-amino-acid polypeptide reads, in one-letter code: 3-hydroxyacyl-[acyl-carrier-protein] dehydratase FabZ (140 aa).

The active site involves His-47.

This sequence belongs to the thioester dehydratase family. FabZ subfamily.

The protein localises to the cytoplasm. The enzyme catalyses a (3R)-hydroxyacyl-[ACP] = a (2E)-enoyl-[ACP] + H2O. Involved in unsaturated fatty acids biosynthesis. Catalyzes the dehydration of short chain beta-hydroxyacyl-ACPs and long chain saturated and unsaturated beta-hydroxyacyl-ACPs. This Streptococcus mutans serotype c (strain ATCC 700610 / UA159) protein is 3-hydroxyacyl-[acyl-carrier-protein] dehydratase FabZ.